We begin with the raw amino-acid sequence, 515 residues long: Tabersonine 6,7-epoxidase isoform 2 (515 aa).

The chain crosses the membrane as a helical span at residues 1-21; sequence MEFVVSPFAFLIFFFILLKMI. Asparagine 173, asparagine 259, and asparagine 352 each carry an N-linked (GlcNAc...) asparagine glycan. Cysteine 449 contacts heme.

Belongs to the cytochrome P450 family. It depends on heme as a cofactor. Mainly expressed in aerial organs, including stems, leaves and flowers.

It is found in the endoplasmic reticulum membrane. The enzyme catalyses (-)-tabersonine + reduced [NADPH--hemoprotein reductase] + O2 = lochnericine + oxidized [NADPH--hemoprotein reductase] + H2O + H(+). It functions in the pathway alkaloid biosynthesis. Component of the monoterpenoid indole alkaloids (MIAs, e.g. echitovenine, tabersonine, lochnericine, 19-hydroxytabersonine and horhammericine) biosynthetic pathway; MIAs are used in cancer treatment and other medical applications. Cytochrome P450 catalyzing the conversion of tabersonine to lochnericine. The sequence is that of Tabersonine 6,7-epoxidase isoform 2 from Catharanthus roseus (Madagascar periwinkle).